A 150-amino-acid chain; its full sequence is Deoxyuridine 5'-triphosphate nucleotidohydrolase (150 aa).

Residues 69 to 71, N82, 86 to 88, and M96 each bind substrate; these read RSG and LID.

Belongs to the dUTPase family. Mg(2+) is required as a cofactor.

It carries out the reaction dUTP + H2O = dUMP + diphosphate + H(+). The protein operates within pyrimidine metabolism; dUMP biosynthesis; dUMP from dCTP (dUTP route): step 2/2. In terms of biological role, this enzyme is involved in nucleotide metabolism: it produces dUMP, the immediate precursor of thymidine nucleotides and it decreases the intracellular concentration of dUTP so that uracil cannot be incorporated into DNA. This is Deoxyuridine 5'-triphosphate nucleotidohydrolase from Leptothrix cholodnii (strain ATCC 51168 / LMG 8142 / SP-6) (Leptothrix discophora (strain SP-6)).